We begin with the raw amino-acid sequence, 197 residues long: Sec-independent protein translocase protein TatB (197 aa).

A helical membrane pass occupies residues M1–G21. Residues K93–R197 form a disordered region. Composition is skewed to basic and acidic residues over residues K104 to D113 and N160 to S169. A compositionally biased stretch (low complexity) spans P180 to R197.

Belongs to the TatB family. In terms of assembly, the Tat system comprises two distinct complexes: a TatABC complex, containing multiple copies of TatA, TatB and TatC subunits, and a separate TatA complex, containing only TatA subunits. Substrates initially bind to the TatABC complex, which probably triggers association of the separate TatA complex to form the active translocon.

The protein localises to the cell inner membrane. Part of the twin-arginine translocation (Tat) system that transports large folded proteins containing a characteristic twin-arginine motif in their signal peptide across membranes. Together with TatC, TatB is part of a receptor directly interacting with Tat signal peptides. TatB may form an oligomeric binding site that transiently accommodates folded Tat precursor proteins before their translocation. This chain is Sec-independent protein translocase protein TatB, found in Pectobacterium atrosepticum (strain SCRI 1043 / ATCC BAA-672) (Erwinia carotovora subsp. atroseptica).